A 618-amino-acid chain; its full sequence is 1-deoxy-D-xylulose-5-phosphate synthase (618 aa).

Thiamine diphosphate contacts are provided by residues histidine 72 and 113–115; that span reads GHA. Aspartate 144 is a binding site for Mg(2+). Thiamine diphosphate-binding positions include 145–146, asparagine 173, histidine 284, and glutamate 359; that span reads GA. Asparagine 173 serves as a coordination point for Mg(2+).

The protein belongs to the transketolase family. DXPS subfamily. In terms of assembly, homodimer. Mg(2+) is required as a cofactor. Requires thiamine diphosphate as cofactor.

The enzyme catalyses D-glyceraldehyde 3-phosphate + pyruvate + H(+) = 1-deoxy-D-xylulose 5-phosphate + CO2. It participates in metabolic intermediate biosynthesis; 1-deoxy-D-xylulose 5-phosphate biosynthesis; 1-deoxy-D-xylulose 5-phosphate from D-glyceraldehyde 3-phosphate and pyruvate: step 1/1. Its function is as follows. Catalyzes the acyloin condensation reaction between C atoms 2 and 3 of pyruvate and glyceraldehyde 3-phosphate to yield 1-deoxy-D-xylulose-5-phosphate (DXP). In Dictyoglomus thermophilum (strain ATCC 35947 / DSM 3960 / H-6-12), this protein is 1-deoxy-D-xylulose-5-phosphate synthase.